Consider the following 316-residue polypeptide: Malate dehydrogenase (316 aa).

NAD(+)-binding positions include 12 to 17 (GAGNIG) and Asp-36. Positions 85 and 91 each coordinate substrate. NAD(+) is bound by residues Asn-98 and 121-123 (VTN). Residues Asn-123 and Arg-154 each contribute to the substrate site. Residue His-178 is the Proton acceptor of the active site.

This sequence belongs to the LDH/MDH superfamily. MDH type 3 family.

It carries out the reaction (S)-malate + NAD(+) = oxaloacetate + NADH + H(+). Functionally, catalyzes the reversible oxidation of malate to oxaloacetate. The polypeptide is Malate dehydrogenase (Wolbachia pipientis wMel).